A 746-amino-acid polypeptide reads, in one-letter code: Probable ubiquitin carboxyl-terminal hydrolase MINDY-4 (746 aa).

3 disordered regions span residues 123 to 179, 198 to 254, and 319 to 342; these read DDET…SEGE, MALG…IKGE, and GKGA…FSNM. 2 stretches are compositionally biased toward polar residues: residues 141-152 and 165-174; these read YRSQNDLQFNKS and TEAGVTSTGV. The active-site Nucleophile is Cys448. His666 (proton acceptor) is an active-site residue.

The protein belongs to the MINDY deubiquitinase family. FAM188 subfamily.

The enzyme catalyses Thiol-dependent hydrolysis of ester, thioester, amide, peptide and isopeptide bonds formed by the C-terminal Gly of ubiquitin (a 76-residue protein attached to proteins as an intracellular targeting signal).. In terms of biological role, probable hydrolase that can remove 'Lys-48'-linked conjugated ubiquitin from proteins. This Xenopus tropicalis (Western clawed frog) protein is Probable ubiquitin carboxyl-terminal hydrolase MINDY-4 (mindy4).